Here is a 186-residue protein sequence, read N- to C-terminus: Putative manganese efflux pump MntP (186 aa).

The next 6 membrane-spanning stretches (helical) occupy residues 3-23, 39-59, 65-85, 109-129, 133-153, and 166-186; these read PIAL…AAIG, IGII…LIGK, VEAW…LHMI, CLTA…LAFI, IWIA…IGIM, and AEIF…YGQL.

Belongs to the MntP (TC 9.B.29) family.

The protein localises to the cell inner membrane. Probably functions as a manganese efflux pump. In Alcanivorax borkumensis (strain ATCC 700651 / DSM 11573 / NCIMB 13689 / SK2), this protein is Putative manganese efflux pump MntP.